Reading from the N-terminus, the 371-residue chain is Glycosyltransferase 8 domain-containing protein 1 (371 aa).

Topologically, residues Met1–Asn7 are cytoplasmic. The helical; Signal-anchor for type II membrane protein transmembrane segment at Ile8–Ser28 threads the bilayer. Residues Leu29–Lys371 are Lumenal-facing. Residues Asn249 and Asn257 are each glycosylated (N-linked (GlcNAc...) asparagine).

The protein belongs to the glycosyltransferase 8 family.

It localises to the membrane. The chain is Glycosyltransferase 8 domain-containing protein 1 (GLT8D1) from Homo sapiens (Human).